A 1897-amino-acid polypeptide reads, in one-letter code: Spectinabilin polyketide synthase system protein NorA (1897 aa).

Positions 112 to 536 (EEPIAIVGMG…GTNAHIILEQ (425 aa)) constitute a Ketosynthase family 3 (KS3) domain. Active-site for beta-ketoacyl synthase activity residues include Cys-283, His-418, and His-458. The interval 538–563 (APEPERPHAPEADGEPRPLPWPVSGH) is disordered. Residues 540–553 (EPERPHAPEADGEP) show a composition bias toward basic and acidic residues. Residues 644-962 (FVFPGQGSQW…VAEAHVHGVA (319 aa)) enclose the Malonyl-CoA:ACP transacylase (MAT) domain. The N-terminal hotdog fold stretch occupies residues 1012 to 1139 (HPLLGAAIPL…GTLAPGGGHP (128 aa)). In terms of domain architecture, PKS/mFAS DH spans 1012–1289 (HPLLGAAIPL…MRPVTAEALH (278 aa)). Residue His-1045 is the Proton acceptor; for dehydratase activity of the active site. Positions 1113–1152 (SRPEDAGADEPWTRHAEGTLAPGGGHPRQDPGPWPPTGAR) are disordered. The interval 1151-1289 (AREIDLDDCY…MRPVTAEALH (139 aa)) is C-terminal hotdog fold. Asp-1211 serves as the catalytic Proton donor; for dehydratase activity. In terms of domain architecture, Ketoreductase (KR) spans 1494–1671 (GTVLVTGGLG…GVSMGWGMWA (178 aa)). One can recognise a Carrier domain in the interval 1777–1852 (ALLLGVVRGH…ALSRYLRTLL (76 aa)). The residue at position 1812 (Ser-1812) is an O-(pantetheine 4'-phosphoryl)serine. Residues 1854–1873 (PDPAPAPTAPDGQPGPDQAD) form a disordered region. The segment covering 1862–1871 (APDGQPGPDQ) has biased composition (low complexity).

As to quaternary structure, the spectinabilin polyketide synthase complex is composed of 4 proteins, NorA, NorA', NorB and NorC. The complex comprises 6 modules with a total of 28 catalytic domains catalyzing 7 chain elongations. NorA comprises one module, NorA' two modules, NorB one module and NorC two modules. Requires pantetheine 4'-phosphate as cofactor.

It catalyses the reaction 4-nitrobenzoyl-CoA + 6 (S)-methylmalonyl-CoA + malonyl-CoA + 6 NADPH + 12 H(+) = demethyldeoxyspectinabilin + 7 CO2 + 6 NADP(+) + 8 CoA + 5 H2O. It participates in antibiotic biosynthesis. The protein operates within polyketide biosynthesis. In terms of biological role, component of a type I modular polyketide synthase (PKS) that generates the backbone of the antibiotic spectinabilin (also known as neoaureothin), a nitroaryl-substituted polyketide metabolite. This PKS system accepts the unusual starter unit 4-nitrobenzoyl-CoA and extends it by 6 molecules of (S)-methylmalonyl-CoA and a single molecule of malonyl-CoA. The first module, NorA, is used twice in an iterative fashion. This Streptomyces orinoci (Streptoverticillium orinoci) protein is Spectinabilin polyketide synthase system protein NorA.